A 362-amino-acid polypeptide reads, in one-letter code: MTEFHLQSQMPSIRLIFRRLSLGRIKPSQSPRCSTSFMVVPSFSIAEHWRRMKGANLSQGMEFELLGLTTDPQLQRLLFVVFLGMYTATLLGNLVMFLLIHVSATLHTPMYSLLKSLSFLDFCYSSTVVPQTLVNFLAKRKVISYFGCMTQMFFYAGFATSECYLIAAMAYDRYAAICNPLLYSTIMSPEVCASLIVGSYSAGFLNSLIHTGCIFSLKFCGAHVVTHFFCDGPPILSLSCVDTSLCEILLFIFAGFNLLSCTLTILISYFLILNTILKMSSAQGRFKAFSTCASHLTAICLFFGTTLFMYLRPRSSYSLTQDRTVAVIYTVVIPVLNPLMYSLRNKDVKKALIKVWGRKTME.

Residues 1–79 (MTEFHLQSQM…TDPQLQRLLF (79 aa)) lie on the Extracellular side of the membrane. Asn56 carries an N-linked (GlcNAc...) asparagine glycan. Residues 80-100 (VVFLGMYTATLLGNLVMFLLI) traverse the membrane as a helical segment. Topologically, residues 101 to 116 (HVSATLHTPMYSLLKS) are cytoplasmic. The helical transmembrane segment at 117 to 139 (LSFLDFCYSSTVVPQTLVNFLAK) threads the bilayer. Residues 140-150 (RKVISYFGCMT) are Extracellular-facing. A disulfide bond links Cys148 and Cys230. A helical membrane pass occupies residues 151–171 (QMFFYAGFATSECYLIAAMAY). Topologically, residues 172-194 (DRYAAICNPLLYSTIMSPEVCAS) are cytoplasmic. A helical transmembrane segment spans residues 195–215 (LIVGSYSAGFLNSLIHTGCIF). Residues 216 to 247 (SLKFCGAHVVTHFFCDGPPILSLSCVDTSLCE) are Extracellular-facing. The helical transmembrane segment at 248-268 (ILLFIFAGFNLLSCTLTILIS) threads the bilayer. The Cytoplasmic segment spans residues 269 to 290 (YFLILNTILKMSSAQGRFKAFS). A helical membrane pass occupies residues 291 to 311 (TCASHLTAICLFFGTTLFMYL). Topologically, residues 312 to 322 (RPRSSYSLTQD) are extracellular. A helical transmembrane segment spans residues 323-343 (RTVAVIYTVVIPVLNPLMYSL). The Cytoplasmic segment spans residues 344-362 (RNKDVKKALIKVWGRKTME).

It belongs to the G-protein coupled receptor 1 family.

Its subcellular location is the cell membrane. In terms of biological role, odorant receptor. This Homo sapiens (Human) protein is Olfactory receptor 5AU1 (OR5AU1).